Here is a 947-residue protein sequence, read N- to C-terminus: Protein translocase subunit SecA 1 (947 aa).

ATP contacts are provided by residues glutamine 87, 105 to 109 (GEGKT), and aspartate 525. Residues 907–937 (DDADKAARDPNRPETWGKVGRNEDCPCNSGK) form a disordered region. The span at 908 to 918 (DADKAARDPNR) shows a compositional bias: basic and acidic residues. Positions 931, 933, 942, and 943 each coordinate Zn(2+).

It belongs to the SecA family. As to quaternary structure, monomer and homodimer. Part of the essential Sec protein translocation apparatus which comprises SecA, SecYEG and auxiliary proteins SecDF-YajC and YidC. The cofactor is Zn(2+).

The protein resides in the cell inner membrane. It is found in the cytoplasm. It catalyses the reaction ATP + H2O + cellular proteinSide 1 = ADP + phosphate + cellular proteinSide 2.. Its function is as follows. Part of the Sec protein translocase complex. Interacts with the SecYEG preprotein conducting channel. Has a central role in coupling the hydrolysis of ATP to the transfer of proteins into and across the cell membrane, serving both as a receptor for the preprotein-SecB complex and as an ATP-driven molecular motor driving the stepwise translocation of polypeptide chains across the membrane. This chain is Protein translocase subunit SecA 1, found in Rhodopseudomonas palustris (strain BisA53).